We begin with the raw amino-acid sequence, 274 residues long: Type II restriction enzyme XamI (274 aa).

It catalyses the reaction Endonucleolytic cleavage of DNA to give specific double-stranded fragments with terminal 5'-phosphates.. In terms of biological role, a P subtype restriction enzyme that recognizes the double-stranded sequence 5'-GTCGAC-3' and cleaves after G-1. The protein is Type II restriction enzyme XamI (xamIR) of Xanthomonas campestris pv. amaranthicola.